Here is a 517-residue protein sequence, read N- to C-terminus: GMP synthase [glutamine-hydrolyzing] (517 aa).

The 191-residue stretch at 9–199 (RILILDFGSQ…VLGVCGCERL (191 aa)) folds into the Glutamine amidotransferase type-1 domain. Catalysis depends on cysteine 86, which acts as the Nucleophile. Catalysis depends on residues histidine 173 and glutamate 175. Residues 200–392 (WTSESIIEDA…LGLPYNMLYR (193 aa)) form the GMPS ATP-PPase domain. 227–233 (SGGVDSS) contributes to the ATP binding site.

As to quaternary structure, homodimer.

The enzyme catalyses XMP + L-glutamine + ATP + H2O = GMP + L-glutamate + AMP + diphosphate + 2 H(+). The protein operates within purine metabolism; GMP biosynthesis; GMP from XMP (L-Gln route): step 1/1. In terms of biological role, catalyzes the synthesis of GMP from XMP. The polypeptide is GMP synthase [glutamine-hydrolyzing] (Vibrio cholerae serotype O1 (strain ATCC 39541 / Classical Ogawa 395 / O395)).